The following is a 353-amino-acid chain: Draxin-B (353 aa).

The signal sequence occupies residues 1–21 (MASSWCLPLALLVSNLAVSHS). Disordered stretches follow at residues 23-183 (EPSS…KEGS), 198-222 (TVMS…RGKV), and 246-268 (VDAW…SGNV). The segment covering 138-167 (GPHKGKAQGHGHHFDHRRHGGRRDKGRHTK) has biased composition (basic residues). The span at 252–261 (SRKKDKRRSK) shows a compositional bias: basic residues. Asn-262 and Asn-267 each carry an N-linked (GlcNAc...) asparagine glycan.

Belongs to the draxin family.

Its subcellular location is the secreted. Chemorepulsive axon guidance protein required for the development of spinal cord and forebrain commissures. Acts as a chemorepulsive guidance protein for commissural axons during development. Able to inhibit or repel neurite outgrowth from dorsal spinal cord. The chain is Draxin-B (draxin-B) from Salmo salar (Atlantic salmon).